A 477-amino-acid chain; its full sequence is Argininosuccinate synthase (477 aa).

ATP is bound by residues 17 to 25 (AFSGGLDTS) and alanine 43. Tyrosine 99 contributes to the L-citrulline binding site. ATP is bound by residues glycine 129 and threonine 131. Residues threonine 131, asparagine 135, and aspartate 136 each coordinate L-aspartate. Asparagine 135 lines the L-citrulline pocket. Aspartate 136 provides a ligand contact to ATP. Positions 139 and 192 each coordinate L-citrulline. Residue aspartate 194 coordinates ATP. L-citrulline-binding residues include threonine 201, glutamate 203, and glutamate 280. The disordered stretch occupies residues 450 to 477 (DQITENPEVQAEPEEEALDAAAMEAGTD). Residues 468-477 (DAAAMEAGTD) show a composition bias toward low complexity.

It belongs to the argininosuccinate synthase family. Type 2 subfamily. As to quaternary structure, homotetramer.

The protein resides in the cytoplasm. The catalysed reaction is L-citrulline + L-aspartate + ATP = 2-(N(omega)-L-arginino)succinate + AMP + diphosphate + H(+). It functions in the pathway amino-acid biosynthesis; L-arginine biosynthesis; L-arginine from L-ornithine and carbamoyl phosphate: step 2/3. The protein is Argininosuccinate synthase of Nocardioides sp. (strain ATCC BAA-499 / JS614).